The following is a 306-amino-acid chain: Aspartate carbamoyltransferase catalytic subunit (306 aa).

The carbamoyl phosphate site is built by arginine 56 and threonine 57. L-aspartate is bound at residue lysine 84. Carbamoyl phosphate is bound by residues arginine 106, histidine 134, and glutamine 137. Residues arginine 167 and arginine 221 each contribute to the L-aspartate site. Residues glycine 262 and proline 263 each coordinate carbamoyl phosphate.

Belongs to the aspartate/ornithine carbamoyltransferase superfamily. ATCase family. In terms of assembly, heterododecamer (2C3:3R2) of six catalytic PyrB chains organized as two trimers (C3), and six regulatory PyrI chains organized as three dimers (R2).

The catalysed reaction is carbamoyl phosphate + L-aspartate = N-carbamoyl-L-aspartate + phosphate + H(+). It functions in the pathway pyrimidine metabolism; UMP biosynthesis via de novo pathway; (S)-dihydroorotate from bicarbonate: step 2/3. In terms of biological role, catalyzes the condensation of carbamoyl phosphate and aspartate to form carbamoyl aspartate and inorganic phosphate, the committed step in the de novo pyrimidine nucleotide biosynthesis pathway. This chain is Aspartate carbamoyltransferase catalytic subunit, found in Desulforudis audaxviator (strain MP104C).